We begin with the raw amino-acid sequence, 279 residues long: Putative pyruvate, phosphate dikinase regulatory protein (279 aa).

153–160 is an ADP binding site; sequence GVSRTSKT.

It belongs to the pyruvate, phosphate/water dikinase regulatory protein family. PDRP subfamily.

It carries out the reaction N(tele)-phospho-L-histidyl/L-threonyl-[pyruvate, phosphate dikinase] + ADP = N(tele)-phospho-L-histidyl/O-phospho-L-threonyl-[pyruvate, phosphate dikinase] + AMP + H(+). The enzyme catalyses N(tele)-phospho-L-histidyl/O-phospho-L-threonyl-[pyruvate, phosphate dikinase] + phosphate + H(+) = N(tele)-phospho-L-histidyl/L-threonyl-[pyruvate, phosphate dikinase] + diphosphate. In terms of biological role, bifunctional serine/threonine kinase and phosphorylase involved in the regulation of the pyruvate, phosphate dikinase (PPDK) by catalyzing its phosphorylation/dephosphorylation. The sequence is that of Putative pyruvate, phosphate dikinase regulatory protein from Bradyrhizobium diazoefficiens (strain JCM 10833 / BCRC 13528 / IAM 13628 / NBRC 14792 / USDA 110).